The following is a 475-amino-acid chain: Gamma-aminobutyric acid receptor subunit gamma-2 (475 aa).

The signal sequence occupies residues 1–39 (MSSPNIWSTGSSVYSTPVFSQKMTLWILLLLSLYPGLTR). The Extracellular segment spans residues 41-275 (KSDDDYEDYA…FDLSRRMGYF (235 aa)). N-linked (GlcNAc...) asparagine glycans are attached at residues Asn52 and Asn129. Cys190 and Cys204 are oxidised to a cystine. Asn247 carries an N-linked (GlcNAc...) asparagine glycan. A helical transmembrane segment spans residues 276–296 (TIQTYIPCTLIVVLSWVSFWI). Over 297–302 (NKDAVP) the chain is Cytoplasmic. The helical transmembrane segment at 303 to 322 (ARTSLGITTVLTMTTLSTIA) threads the bilayer. Over 323 to 334 (RKSLPKVSYVTA) the chain is Extracellular. A helical membrane pass occupies residues 335-359 (MDLFVSVCFIFVFSALVEYGTLHYF). Topologically, residues 360-451 (VSNRKPSKDK…IHIRIAKMDS (92 aa)) are cytoplasmic. The residue at position 382 (Ser382) is a Phosphoserine; by PKC. A helical transmembrane segment spans residues 452–472 (YARIFFPTAFCLFNLVYWVSY). Residues 473–475 (LYL) lie on the Extracellular side of the membrane.

The protein belongs to the ligand-gated ion channel (TC 1.A.9) family. Gamma-aminobutyric acid receptor (TC 1.A.9.5) subfamily. GABRG2 sub-subfamily. Heteropentamer, formed by a combination of alpha (GABRA1-6), beta (GABRB1-3), gamma (GABRG1-3), delta (GABRD), epsilon (GABRE), rho (GABRR1-3), pi (GABRP) and theta (GABRQ) chains, each subunit exhibiting distinct physiological and pharmacological properties. Interacts with GABARAP. Interacts with KIF21B. Identified in a complex of 720 kDa composed of LHFPL4, NLGN2, GABRA1, GABRB2, GABRG2 and GABRB3. Interacts with LHFPL4. Interacts with SHISA7; interaction leads to the regulation of GABA(A) receptor trafficking, channel deactivation kinetics and pharmacology. In terms of processing, palmitoylated by ZDHHC3/GODZ; required for the accumulation of GABA(A) receptors at the postsynaptic membrane of inhibitory GABAergic synapses. Glycosylated.

Its subcellular location is the postsynaptic cell membrane. It localises to the cell membrane. The protein resides in the cell projection. The protein localises to the dendrite. It is found in the cytoplasmic vesicle membrane. The enzyme catalyses chloride(in) = chloride(out). Allosterically activated by benzodiazepines. Activated by pentobarbital. Inhibited by the antagonist bicuculline. Inhibited by zinc ions. Potentiated by histamine. In terms of biological role, gamma subunit of the heteropentameric ligand-gated chloride channel gated by gamma-aminobutyric acid (GABA), a major inhibitory neurotransmitter in the brain. GABA-gated chloride channels, also named GABA(A) receptors (GABAAR), consist of five subunits arranged around a central pore and contain GABA active binding site(s) located at the alpha and beta subunit interface(s). When activated by GABA, GABAARs selectively allow the flow of chloride anions across the cell membrane down their electrochemical gradient. Gamma-2/GABRG2-containing GABAARs are found at both synaptic and extrasynaptic sites. Chloride influx into the postsynaptic neuron following GABAAR opening decreases the neuron ability to generate a new action potential, thereby reducing nerve transmission. GABAARs containing alpha-1 and beta-2 or -3 subunits exhibit synaptogenic activity; the gamma-2 subunit being necessary but not sufficient to induce rapid synaptic contacts formation. Extrasynaptic gamma-2-containing receptors contribute to the tonic GABAergic inhibition. GABAARs function also as histamine receptor where histamine binds at the interface of two neighboring beta subunits and potentiates GABA response in a gamma-2 subunit-controlled manner. This Bos taurus (Bovine) protein is Gamma-aminobutyric acid receptor subunit gamma-2 (GABRG2).